A 552-amino-acid chain; its full sequence is AP-1-like transcription factor (552 aa).

Positions 1–14 are enriched in polar residues; that stretch reads MSGQTETLSSTSNI. The segment at 1–99 is disordered; the sequence is MSGQTETLSS…QRAFRKRKED (99 aa). Residues 36 to 47 are compositionally biased toward basic and acidic residues; that stretch reads PVSDRSSRRTSS. Positions 48–61 are enriched in acidic residues; sequence EEVDLMPNVDDEVD. Residues 62 to 80 are compositionally biased toward basic and acidic residues; sequence GDVKPKKIGRKNSDQEPSS. A bZIP domain is found at 76 to 139; that stretch reads QEPSSKRKAQ…RQLEEELRIL (64 aa). The Nuclear localization signal motif lies at 81 to 88; it reads KRKAQNRA. The interval 81-102 is basic motif; sequence KRKAQNRAAQRAFRKRKEDHLK. The segment at 104–111 is leucine-zipper; sequence LETQVVTL. A disordered region spans residues 213–244; it reads QVPPTLVDSNSAQGTLSPETPSSSDSPSNLYL. Positions 219–228 are enriched in polar residues; that stretch reads VDSNSAQGTL. Residues 229–240 are compositionally biased toward low complexity; that stretch reads SPETPSSSDSPS. The tract at residues 259–290 is n-CRD; it reads CSALSNGENGEDVADGKQFCQKLSTACGSIAC. 2 disulfides stabilise this stretch: C278/C501 and C285/C532. The interval 460-489 is disordered; it reads ISNHPDEVPPDGLPQKGKHDTSSQMPSENE. Positions 501-532 are c-CRD; sequence CPKVWSKIINHPRFESFDIDDLCSKLKNKAKC. The short motif at 515 to 533 is the Nuclear export signal element; it reads ESFDIDDLCSKLKNKAKCS.

It belongs to the bZIP family. YAP subfamily. In terms of assembly, homodimer. The reduced form of pap1 interacts in the nucleus with the nuclear export protein crm1, and in the cytoplasm with the peroxiredoxin tpx1. Depending on the oxidative stress inducing agent, pap1 can undergo two distinct conformational changes, both masking the nuclear export signal, thus abolishing nuclear export by crm1/exportin 1. The glutathione-depleting agent diethylmaleate (DEM) leads to the non-reversible modification of at least 2 cysteine residues in the c-CRD. Peroxide stress induces the formation of a tpx1-dependent interdomain disulfide bond between Cys-278 and Cys-501.

The protein localises to the nucleus. It localises to the cytoplasm. Functionally, transcription activator involved in multidrug resistance, oxidative stress response, and redox homeostasis. Regulates the transcription of genes encoding antioxidant enzymes like catalase ctt1 and components of the cellular thiol-reducing pathways, including the thioredoxin system (trx2, trr1), ABC transporters involved in multidrug resistance like bfr1/hba2 and pmd1 as well as the gene obr1/apt1. Preferentially binds to promoters with the core binding site 5'-TTA[CG]TAA-3'. Activity of the transcription factor is controlled through oxidation of specific cysteine residues resulting in the alteration of its subcellular location. Oxidative stress induces nuclear accumulation and as a result pap1 transcriptional activity. Required for sty1/spc1-conferred staurosporine resistance. In Schizosaccharomyces pombe (strain 972 / ATCC 24843) (Fission yeast), this protein is AP-1-like transcription factor (pap1).